The sequence spans 491 residues: Proline--tRNA ligase (491 aa).

It belongs to the class-II aminoacyl-tRNA synthetase family. ProS type 3 subfamily. Homodimer.

The protein resides in the cytoplasm. It carries out the reaction tRNA(Pro) + L-proline + ATP = L-prolyl-tRNA(Pro) + AMP + diphosphate. Catalyzes the attachment of proline to tRNA(Pro) in a two-step reaction: proline is first activated by ATP to form Pro-AMP and then transferred to the acceptor end of tRNA(Pro). The protein is Proline--tRNA ligase of Amoebophilus asiaticus (strain 5a2).